The chain runs to 339 residues: Major pollen allergen Lol p 5b (339 aa).

The signal sequence occupies residues 1–25; it reads MAVQKHTVALFLAVALVAGPAASYA. 9 repeat units span residues 32 to 34, 35 to 37, 38 to 40, 41 to 43, 44 to 46, 47 to 49, 50 to 52, 53 to 55, and 56 to 58. Residues 32 to 58 are 9 X 3 AA tandem repeats of [PA]-A-[TA]; the sequence is PATPATPAAPATAATPATPATPATPAA. Over residues 36–58 the composition is skewed to low complexity; the sequence is ATPAAPATAATPATPATPATPAA. The tract at residues 36–65 is disordered; sequence ATPAAPATAATPATPATPATPAAVPSGKAT. One copy of the 2-1; truncated repeat lies at 285–290; sequence ATPAAA. The segment at 285-334 is 6 X 9 AA approximate tandem repeats of T-A-T-A-T-P-A-A-A; sequence ATPAAAATATPTPAAATATATPAAAYATATPAAATATATPAAATATPAAA. Tandem repeats lie at residues 292–300, 301–309, 310–318, and 319–327. The 2-6; truncated repeat unit spans residues 328-334; that stretch reads TATPAAA.

Belongs to the Poa p IX/Phl p VI allergen family. Pollen, starch granules.

This is Major pollen allergen Lol p 5b from Lolium perenne (Perennial ryegrass).